We begin with the raw amino-acid sequence, 311 residues long: MTEEINIDTATLEQLRDVLTNKSGDVKLANRFRALFNLKCVGAESENQDEVHKAIDYIAESFKDDSELLKHEVAYVLGQTKNLHAAQYLRSVLENNNQQIMVRHEAAEALGALGDKDSLALLEDYFKNDPSIEIKQTCELAIERIRWENSEKAKAENLETSLYTSIDPAPPMPSDQESKVEKLQKILNNQDEPLFERYRAMFRLRDMGTDEACLALASGLDDDPSALFKHEIAYVFGQLCNPVTVPALIKTLKDEREAAMVRHEAAEALGSIATDECLPVLQSFLNDKDQVVRDSAVVALDMYEYENSTEI.

5 HEAT-like PBS-type repeats span residues 69-95 (LKHE…VLEN), 102-128 (VRHE…YFKN), 196-222 (ERYR…GLDD), 228-254 (FKHE…TLKD), and 261-287 (VRHE…FLND). Fe cation contacts are provided by His-71, Glu-72, His-104, and Glu-105. Fe cation is bound by residues His-230, Glu-231, His-263, and Glu-264.

Belongs to the deoxyhypusine hydroxylase family. The cofactor is Fe(2+).

The protein localises to the cytoplasm. The protein resides in the nucleus. The enzyme catalyses [eIF5A protein]-deoxyhypusine + AH2 + O2 = [eIF5A protein]-hypusine + A + H2O. Its pathway is protein modification; eIF5A hypusination. Catalyzes the hydroxylation of the N(6)-(4-aminobutyl)-L-lysine intermediate to form hypusine, an essential post-translational modification only found in mature eIF-5A factor. The polypeptide is Deoxyhypusine hydroxylase (Debaryomyces hansenii (strain ATCC 36239 / CBS 767 / BCRC 21394 / JCM 1990 / NBRC 0083 / IGC 2968) (Yeast)).